Reading from the N-terminus, the 79-residue chain is Short neurotoxin 4 (79 aa).

Positions 1-21 are cleaved as a signal peptide; it reads MKTLLLTLVMVTIMCLDLGYT. Disulfide bonds link Cys24-Cys41, Cys34-Cys59, and Cys63-Cys71.

It belongs to the three-finger toxin family. Short-chain subfamily. Type III alpha-neurotoxin sub-subfamily. As to expression, expressed by the venom gland.

Its subcellular location is the secreted. Binds with high affinity to muscle nicotinic acetylcholine receptor (nAChR) and hinders acetylcholine binding to the receptor, thereby impairing neuromuscular transmission. Causes muscle paralysis, spasms and increased respiration. This Pseudonaja textilis (Eastern brown snake) protein is Short neurotoxin 4.